The following is a 607-amino-acid chain: Runt-related transcription factor 2 (607 aa).

Positions 1 to 88 are interaction with IFI204; it reads MLHSPHKQPQ…TMASNSLFSA (88 aa). A compositionally biased stretch (low complexity) spans 100 to 112; it reads PSTSRRFSPPSSS. A disordered region spans residues 100-126; it reads PSTSRRFSPPSSSLQPGKMSDVSPVVA. The region spanning 187–315 is the Runt domain; that stretch reads TMVEIIADHP…TVDGPREPRR (129 aa). Residues 242–258 form a required for interaction with FOXO1 region; it reads VMAGNDENYSAELRNAS. The segment at 307 to 430 is disordered; it reads VDGPREPRRH…VPRRISDDDT (124 aa). K324 is covalently cross-linked (Glycyl lysine isopeptide (Lys-Gly) (interchain with G-Cter in SUMO2)). R353 bears the Asymmetric dimethylarginine mark. Over residues 353-412 the composition is skewed to polar residues; sequence RPSLNSAPSPFNPQGQSQITDPRQAQSSPPWSYDQSYPSYLSQMTSPSIHSTTPLSSTRG. An interaction with KAT6A region spans residues 422–525; that stretch reads PRRISDDDTA…SQSQSGPFQT (104 aa). Residues 460 to 554 are interaction with KAT6B; the sequence is RQFPSISSLT…VPGGDRSPSR (95 aa). S537 bears the Phosphoserine; by CDK1 mark. The disordered stretch occupies residues 548–607; sequence GDRSPSRMVPPCTTTSNGSTLLNPNLPNQNDGVDADGSHSSSPTVLNSSGRMDESVWRPY. 2 stretches are compositionally biased toward polar residues: residues 559 to 578 and 585 to 597; these read CTTTSNGSTLLNPNLPNQND and SHSSSPTVLNSSG. Basic and acidic residues predominate over residues 598-607; the sequence is RMDESVWRPY.

Heterodimer of an alpha and a beta subunit. The alpha subunit binds DNA as a monomer and through the Runt domain. DNA-binding is increased by heterodimerization. Interacts with XRCC6 (Ku70) and XRCC5 (Ku80). Interacts with CCNB1, KAT6A and KAT6B. Interacts with HIVEP3. Interacts with IFI204. Interaction with SATB2; the interaction results in enhanced DNA binding and transactivation by these transcription factors. Binds to HIPK3. Interacts with FOXO1 (via a C-terminal region); the interaction inhibits RUNX2 transcriptional activity towards BGLAP. Interacts with FOXP3. Interacts with TMEM119. Interacts with OLFM2. Interacts with IPO7; the interaction inhibits RUNX2 nuclear translocation in osteoblasts. As to quaternary structure, interacts with DDX5. Post-translationally, phosphorylated; probably by MAP kinases (MAPK). Phosphorylation by HIPK3 is required for the SPEN/MINT and FGF2 transactivation during osteoblastic differentiation. Phosphorylation at Ser-537 by CDK1 promotes endothelial cell proliferation required for tumor angiogenesis probably by facilitating cell cycle progression. In terms of tissue distribution, found in thymus and testis, T-cell lines but not in B-cell lines. Isoform 2 is exclusively found in bone, particularly in osteoblasts; isoforms 3 and 4 are expressed in T-cell lines; isoforms 5, 6, 7, 8 and 9 can be found in osteoblasts and osteosarcoma cell lines.

The protein resides in the nucleus. The protein localises to the cytoplasm. Transcription factor involved in osteoblastic differentiation and skeletal morphogenesis. Essential for the maturation of osteoblasts and both intramembranous and endochondral ossification. CBF binds to the core site, 5'-PYGPYGGT-3', of a number of enhancers and promoters, including murine leukemia virus, polyomavirus enhancer, T-cell receptor enhancers, osteocalcin, osteopontin, bone sialoprotein, alpha 1(I) collagen, LCK, IL-3 and GM-CSF promoters. Inhibits KAT6B-dependent transcriptional activation. In osteoblasts, supports transcription activation: synergizes with SPEN/MINT to enhance FGFR2-mediated activation of the osteocalcin FGF-responsive element (OCFRE). The polypeptide is Runt-related transcription factor 2 (Runx2) (Mus musculus (Mouse)).